We begin with the raw amino-acid sequence, 72 residues long: Toxin Acra II-2 (72 aa).

The LCN-type CS-alpha/beta domain maps to 3–67 (VPGNYPLNTN…VWNAAKNYCK (65 aa)). Cystine bridges form between Cys18-Cys41, Cys27-Cys46, and Cys31-Cys48.

Belongs to the long (3 C-C) scorpion toxin superfamily. Sodium channel inhibitor family. Beta subfamily. As to expression, expressed by the venom gland.

It localises to the secreted. In terms of biological role, binds to sodium channels (Nav) and affects the channel activation process. This Androctonus crassicauda (Arabian fat-tailed scorpion) protein is Toxin Acra II-2.